The primary structure comprises 155 residues: Small ribosomal subunit protein uS7 (155 aa).

This sequence belongs to the universal ribosomal protein uS7 family. In terms of assembly, part of the 30S ribosomal subunit. Contacts proteins S9 and S11.

One of the primary rRNA binding proteins, it binds directly to 16S rRNA where it nucleates assembly of the head domain of the 30S subunit. Is located at the subunit interface close to the decoding center, probably blocks exit of the E-site tRNA. In Mycoplasma mycoides subsp. mycoides SC (strain CCUG 32753 / NCTC 10114 / PG1), this protein is Small ribosomal subunit protein uS7.